Consider the following 325-residue polypeptide: MTMDDLDLRLLDGFQRDLPLEPRPFAAMATRLGTGEAEVIARLVRLRDEGIVSRIGATCRPNTAGASTLAALRVPAPRVDEIAALVGAEPGVNHSYLREGDWNLWFVATAPDTAALAESLVRIEAATGLAVLSLPLVRAFNIDLGFPLIGPRRAMALDRPADLDALRPRDKALMQALSSGLALVPRPFVALGQALHRSEAEVISRIRALAEARILTRVGVIVKHRALGWTQNAMVVWRLPEAAVEAAGTALAGVPGVTLCYQRRCVPGLWDWPLFCMIHARSHAEAMEVLAEARALPELQEVPHRILFSTRCFRQRGATIAEVAA.

This sequence belongs to the Ahb/Nir family. As to quaternary structure, forms a complex composed of NirDL, NirG and NirH. All proteins are required for the total conversion of siroheme to didecarboxysiroheme.

The enzyme catalyses siroheme + 2 H(+) = 12,18-didecarboxysiroheme + 2 CO2. The protein operates within porphyrin-containing compound metabolism. Involved in heme d1 biosynthesis. Catalyzes the decarboxylation of siroheme into didecarboxysiroheme. The sequence is that of Siroheme decarboxylase NirDL subunit from Paracoccus denitrificans (strain Pd 1222).